Here is a 466-residue protein sequence, read N- to C-terminus: Cysteine--tRNA ligase (466 aa).

Cysteine 28 contacts Zn(2+). The short motif at 30–40 (PTVYNYIHIGN) is the 'HIGH' region element. Zn(2+)-binding residues include cysteine 208, histidine 233, and glutamate 237. The 'KMSKS' region signature appears at 265–269 (KMSKS). An ATP-binding site is contributed by lysine 268.

Belongs to the class-I aminoacyl-tRNA synthetase family. Monomer. Requires Zn(2+) as cofactor.

It localises to the cytoplasm. It catalyses the reaction tRNA(Cys) + L-cysteine + ATP = L-cysteinyl-tRNA(Cys) + AMP + diphosphate. The sequence is that of Cysteine--tRNA ligase from Staphylococcus epidermidis (strain ATCC 35984 / DSM 28319 / BCRC 17069 / CCUG 31568 / BM 3577 / RP62A).